A 67-amino-acid polypeptide reads, in one-letter code: Large ribosomal subunit protein bL35 (67 aa).

Residues 1–16 (MPKMKTKSSAKKRFRV) are compositionally biased toward basic residues. Residues 1-24 (MPKMKTKSSAKKRFRVRPGGTVKR) are disordered.

The protein belongs to the bacterial ribosomal protein bL35 family.

The polypeptide is Large ribosomal subunit protein bL35 (Verminephrobacter eiseniae (strain EF01-2)).